The sequence spans 143 residues: uncharacterized protein (143 aa).

The protein to E.coli YifN.

This is an uncharacterized protein from Haemophilus influenzae (strain ATCC 51907 / DSM 11121 / KW20 / Rd).